We begin with the raw amino-acid sequence, 237 residues long: DNA repair protein RecO (237 aa).

Belongs to the RecO family.

Its function is as follows. Involved in DNA repair and RecF pathway recombination. This Rickettsia felis (strain ATCC VR-1525 / URRWXCal2) (Rickettsia azadi) protein is DNA repair protein RecO.